Consider the following 588-residue polypeptide: Sperm-associated microtubule inner protein 4 (588 aa).

Residue Thr219 is modified to Phosphothreonine. Phosphoserine is present on residues Ser224, Ser406, Ser421, Ser427, and Ser437. A Phosphotyrosine modification is found at Tyr441. Phosphoserine occurs at positions 457 and 484. Thr512 bears the Phosphothreonine mark. Ser516 carries the post-translational modification Phosphoserine. Lys543 is covalently cross-linked (Glycyl lysine isopeptide (Lys-Gly) (interchain with G-Cter in SUMO2)). Ser545 bears the Phosphoserine mark.

The protein localises to the cytoplasm. It is found in the cytoskeleton. It localises to the microtubule organizing center. Its subcellular location is the centrosome. The protein resides in the flagellum axoneme. Its function is as follows. Microtubule inner protein (MIP) part of the dynein-decorated doublet microtubules (DMTs) in flagellum axoneme. May serve to reinforce and thus stabilize the microtubule structure in the sperm flagella. The polypeptide is Sperm-associated microtubule inner protein 4 (Spmip4) (Rattus norvegicus (Rat)).